A 239-amino-acid polypeptide reads, in one-letter code: Ribitol-5-phosphate cytidylyltransferase (239 aa).

Residues 7–10 (FAGG) and 80–86 (GETGQMS) each bind CTP.

The protein belongs to the IspD/TarI cytidylyltransferase family. TarI subfamily.

The catalysed reaction is D-ribitol 5-phosphate + CTP + H(+) = CDP-L-ribitol + diphosphate. Its pathway is cell wall biogenesis; poly(ribitol phosphate) teichoic acid biosynthesis. In terms of biological role, catalyzes the transfer of the cytidylyl group of CTP to D-ribitol 5-phosphate. This Streptococcus agalactiae serotype III (strain NEM316) protein is Ribitol-5-phosphate cytidylyltransferase.